A 92-amino-acid polypeptide reads, in one-letter code: Major allergen I polypeptide chain 1 (92 aa).

The N-terminal stretch at 1–22 is a signal peptide; that stretch reads MKGACVLVLLWAALLLISGGNC.

This sequence belongs to the secretoglobin family. In terms of assembly, heterotetramer composed of two non-covalently linked disulfide-linked heterodimer of chains 1 and 2. Saliva and sebaceous glands.

Its subcellular location is the secreted. This is Major allergen I polypeptide chain 1 (CH1) from Felis catus (Cat).